Consider the following 80-residue polypeptide: EMBRYO SURROUNDING FACTOR 1-like protein 1 (80 aa).

The signal sequence occupies residues 1–22; sequence MKSSHIALLCIVVLSLFALHEC. Disulfide bonds link C38–C52, C43–C78, C50–C74, and C53–C64.

This sequence belongs to the MEG family. As to expression, expressed in leaves.

In Arabidopsis thaliana (Mouse-ear cress), this protein is EMBRYO SURROUNDING FACTOR 1-like protein 1 (ESFL1).